Here is a 458-residue protein sequence, read N- to C-terminus: Ig mu chain C region secreted form (458 aa).

Residues 1–106 are CH1; sequence VSLSSPTLYP…SNRDLRVSFP (106 aa). A disulfide bridge connects residues Cys-28 and Cys-90. Residues Asn-46 and Asn-114 are each glycosylated (N-linked (GlcNAc...) asparagine). Residues 107–222 form a CH2 region; sequence VDSELPPNVS…VSMSSECSTT (116 aa). A disulfide bond links Cys-137 and Cys-200. N-linked (GlcNAc...) asparagine glycosylation is found at Asn-212, Asn-261, Asn-277, and Asn-284. A CH3 region spans residues 223-327; that stretch reads PSPGIQVFPI…PLKHTISKSR (105 aa). 2 disulfide bridges follow: Cys-249–Cys-308 and Cys-356–Cys-418. Residues 328–458 form a CH4 region; that stretch reads EVAKHPPAVY…IMSDTASTCY (131 aa). Asn-445 carries N-linked (GlcNAc...) asparagine glycosylation.

It is found in the secreted. The chain is Ig mu chain C region secreted form from Oryctolagus cuniculus (Rabbit).